We begin with the raw amino-acid sequence, 258 residues long: MAAAAAAAGDSDSWDADAFSVEDPVRKVGGGGTAGGDRWEGEDEDEDVKDNWDDDDDEKKEEAEVKPEVKISEKKKIAEKIKEKERQQKKRQEEIKKRLEEPEEPKVLTPEEQLADKLRLKKLQEESDLELAKETFGVNNAVYGIDAMNPSSRDDFTEFGKLLKDKITQYEKSLYYASFLEVLVRDVCISLEIDDLKKITNSLTVLCSEKQKQEKQSKAKKKKKGVVPGGGLKATMKDDLADYGGYDGGYVQDYEDFM.

Residues 1 to 11 (MAAAAAAAGDS) are compositionally biased toward low complexity. The interval 1 to 108 (MAAAAAAAGD…LEEPEEPKVL (108 aa)) is disordered. A2 carries the post-translational modification N-acetylalanine. Residues 2–69 (AAAAAAAGDS…KEEAEVKPEV (68 aa)) are sufficient for interaction with EIF3B. A phosphoserine mark is found at S11, S13, and S20. Residues 40-59 (EGEDEDEDVKDNWDDDDDEK) show a composition bias toward acidic residues. The segment covering 60 to 106 (KEEAEVKPEVKISEKKKIAEKIKEKERQQKKRQEEIKKRLEEPEEPK) has biased composition (basic and acidic residues). Positions 70–135 (KISEKKKIAE…ESDLELAKET (66 aa)) form a coiled coil. K106 is covalently cross-linked (Glycyl lysine isopeptide (Lys-Gly) (interchain with G-Cter in SUMO2)). The residue at position 109 (T109) is a Phosphothreonine. S127 carries the post-translational modification Phosphoserine. Residues 217 to 238 (SKAKKKKKGVVPGGGLKATMKD) are disordered. Positions 243–258 (YGGYDGGYVQDYEDFM) are promotes stable association with the 40S ribosome. At Y254 the chain carries Phosphotyrosine.

Component of the eukaryotic translation initiation factor 3 (eIF-3) complex, which is composed of 13 subunits: EIF3A, EIF3B, EIF3C, EIF3D, EIF3E, EIF3F, EIF3G, EIF3H, EIF3I, EIF3J, EIF3K, EIF3L and EIF3M. The eIF-3 complex appears to include 3 stable modules: module A is composed of EIF3A, EIF3B, EIF3G and EIF3I; module B is composed of EIF3F, EIF3H, and EIF3M; and module C is composed of EIF3C, EIF3D, EIF3E, EIF3K and EIF3L. EIF3C of module C binds EIF3B of module A and EIF3H of module B, thereby linking the three modules. EIF3J is a labile subunit that binds to the eIF-3 complex via EIF3B. The eIF-3 complex interacts with RPS6KB1 under conditions of nutrient depletion. Mitogenic stimulation leads to binding and activation of a complex composed of MTOR and RPTOR, leading to phosphorylation and release of RPS6KB1 and binding of EIF4B to eIF-3. Phosphorylated. Phosphorylation is enhanced upon serum stimulation.

The protein localises to the cytoplasm. Component of the eukaryotic translation initiation factor 3 (eIF-3) complex, which is required for several steps in the initiation of protein synthesis. The eIF-3 complex associates with the 40S ribosome and facilitates the recruitment of eIF-1, eIF-1A, eIF-2:GTP:methionyl-tRNAi and eIF-5 to form the 43S pre-initiation complex (43S PIC). The eIF-3 complex stimulates mRNA recruitment to the 43S PIC and scanning of the mRNA for AUG recognition. The eIF-3 complex is also required for disassembly and recycling of post-termination ribosomal complexes and subsequently prevents premature joining of the 40S and 60S ribosomal subunits prior to initiation. The eIF-3 complex specifically targets and initiates translation of a subset of mRNAs involved in cell proliferation, including cell cycling, differentiation and apoptosis, and uses different modes of RNA stem-loop binding to exert either translational activation or repression. The polypeptide is Eukaryotic translation initiation factor 3 subunit J (Homo sapiens (Human)).